The following is a 121-amino-acid chain: LOB domain-containing protein 24 (121 aa).

The region spanning 4-105 is the LOB domain; it reads KRCAACKYLR…NELAKTQAEI (102 aa).

It belongs to the LOB domain-containing protein family.

The sequence is that of LOB domain-containing protein 24 (LBD24) from Arabidopsis thaliana (Mouse-ear cress).